We begin with the raw amino-acid sequence, 339 residues long: Zinc transporter 3 (339 aa).

Positions 1–25 (MKTKNVKLLFFFFSVSLLLIAVVNA) are cleaved as a signal peptide. Topologically, residues 26 to 54 (AEGHSHGGPKCECSHEDDHENKAGARKYK) are extracellular. Residues 55 to 75 (IAAIPTVLIAGIIGVLFPLLG) form a helical membrane-spanning segment. The Cytoplasmic portion of the chain corresponds to 76 to 86 (KVFPSLRPETC). The helical transmembrane segment at 87 to 107 (FFFVTKAFAAGVILATGFMHV) threads the bilayer. Over 108-123 (LPEAYEMLNSPCLTSE) the chain is Extracellular. The chain crosses the membrane as a helical span at residues 124–144 (AWEFPFTGFIAMIAAILTLSV). The Cytoplasmic segment spans residues 145-184 (DTFATSSFYKSHCKASKRVSDGETGESSVDSEKVQILRTR). Residues 185–205 (VIAQVLELGIIVHSVVIGISL) traverse the membrane as a helical segment. Over 206–216 (GASQSPDAAKA) the chain is Extracellular. The chain crosses the membrane as a helical span at residues 217-237 (LFIALMFHQCFEGLGLGGCIA). At 238–247 (QGKFKCLSVT) the chain is on the cytoplasmic side. A helical membrane pass occupies residues 248–268 (IMSTFFAITTPIGIVVGMGIA). Residues 269–278 (NSYDESSPTA) lie on the Extracellular side of the membrane. The helical transmembrane segment at 279 to 299 (LIVQGVLNAASAGILIYMSLV) threads the bilayer. Residues 300–315 (DLLAADFTHPKMQSNT) lie on the Cytoplasmic side of the membrane. A helical membrane pass occupies residues 316–336 (GLQIMAHIALLLGAGLMSLLA). At 337–339 (KWA) the chain is on the extracellular side.

Belongs to the ZIP transporter (TC 2.A.5) family. In terms of tissue distribution, expressed predominantly in the roots of zinc-deficient plants.

Its subcellular location is the cell membrane. In terms of biological role, mediates zinc uptake from the rhizosphere. May also transport other divalent cations. The sequence is that of Zinc transporter 3 (ZIP3) from Arabidopsis thaliana (Mouse-ear cress).